The primary structure comprises 445 residues: Phosphoglucosamine mutase (445 aa).

Residue Ser-102 is the Phosphoserine intermediate of the active site. Ser-102, Asp-240, Asp-242, and Asp-244 together coordinate Mg(2+). At Ser-102 the chain carries Phosphoserine.

This sequence belongs to the phosphohexose mutase family. Requires Mg(2+) as cofactor. Post-translationally, activated by phosphorylation.

The catalysed reaction is alpha-D-glucosamine 1-phosphate = D-glucosamine 6-phosphate. In terms of biological role, catalyzes the conversion of glucosamine-6-phosphate to glucosamine-1-phosphate. The chain is Phosphoglucosamine mutase from Mycolicibacterium vanbaalenii (strain DSM 7251 / JCM 13017 / BCRC 16820 / KCTC 9966 / NRRL B-24157 / PYR-1) (Mycobacterium vanbaalenii).